The sequence spans 263 residues: N-glycosylase/DNA lyase (263 aa).

Positions 43, 71, and 82 each coordinate 8-oxoguanine. Positions 139–204 (RRYYFENMMG…EDVRIKAYTE (66 aa)) are helix-hairpin-helix. The active-site Schiff-base intermediate with DNA is the Lys164. 2 residues coordinate 8-oxoguanine: Phe168 and Pro194. Residue Asp196 is part of the active site. Residues Asp230 and Trp234 each coordinate 8-oxoguanine.

It belongs to the archaeal N-glycosylase/DNA lyase (AGOG) family.

The enzyme catalyses 2'-deoxyribonucleotide-(2'-deoxyribose 5'-phosphate)-2'-deoxyribonucleotide-DNA = a 3'-end 2'-deoxyribonucleotide-(2,3-dehydro-2,3-deoxyribose 5'-phosphate)-DNA + a 5'-end 5'-phospho-2'-deoxyribonucleoside-DNA + H(+). Its function is as follows. DNA repair enzyme that is part of the base excision repair (BER) pathway; protects from oxidative damage by removing the major product of DNA oxidation, 8-oxoguanine (GO), from single- and double-stranded DNA substrates. The sequence is that of N-glycosylase/DNA lyase from Thermococcus kodakarensis (strain ATCC BAA-918 / JCM 12380 / KOD1) (Pyrococcus kodakaraensis (strain KOD1)).